The sequence spans 795 residues: Protein espinas (795 aa).

The disordered stretch occupies residues 30–96; it reads GTGLTFPPHR…FVSPLQRRHC (67 aa). A compositionally biased stretch (low complexity) spans 52 to 66; that stretch reads ASMSSNVASTATSSN. One can recognise a PET domain in the interval 135 to 243; that stretch reads LDFQRNSQSD…AVRLLSDERP (109 aa). 3 consecutive LIM zinc-binding domains span residues 242 to 306, 307 to 367, and 368 to 430; these read RPCK…ETQK, PRCS…MFAE, and YCDY…GEPP. Disordered regions lie at residues 427–487 and 616–684; these read GEPP…GSAG and NRNT…EMQI. 2 stretches are compositionally biased toward basic and acidic residues: residues 459–471 and 637–649; these read RSGDRDRERESSR and LDNRPLKEVRFHS. Residues 650–662 show a composition bias toward polar residues; the sequence is VQDTMSRSKSYTD. The span at 666–675 shows a compositional bias: basic residues; that stretch reads ARRRRRRRNQ.

This sequence belongs to the prickle / espinas / testin family.

The chain is Protein espinas from Drosophila pseudoobscura pseudoobscura (Fruit fly).